We begin with the raw amino-acid sequence, 168 residues long: MTCFKLCCRRDLFAFPYPVAIWKEPPRSIEVVRDLVESYGIEQIYTVGDIVTTNFLKYSLAPTSAAVDGKTRRGLKIDKPTFFRKTIEVYNPPGYITEEAWIAVEEAVRDNVMIKVNGEEDMLSLAFIKLAPPHSVVVYGHYMGALIAIPVDWYRDAICKLFEYLEKC.

The GTP site is built by Asp49, Ile50, Val51, Asp68, Lys70, and Glu120.

It belongs to the GTP-dependent DPCK family.

The enzyme catalyses 3'-dephospho-CoA + GTP = GDP + CoA + H(+). The protein operates within cofactor biosynthesis; coenzyme A biosynthesis. In terms of biological role, catalyzes the GTP-dependent phosphorylation of the 3'-hydroxyl group of dephosphocoenzyme A to form coenzyme A (CoA). The protein is GTP-dependent dephospho-CoA kinase of Pyrobaculum islandicum (strain DSM 4184 / JCM 9189 / GEO3).